The following is a 233-amino-acid chain: Biosynthetic peptidoglycan transglycosylase (233 aa).

A helical membrane pass occupies residues 8–28 (LIALPVGIFIFFNAYVYGNII).

This sequence belongs to the glycosyltransferase 51 family.

The protein resides in the cell inner membrane. It carries out the reaction [GlcNAc-(1-&gt;4)-Mur2Ac(oyl-L-Ala-gamma-D-Glu-L-Lys-D-Ala-D-Ala)](n)-di-trans,octa-cis-undecaprenyl diphosphate + beta-D-GlcNAc-(1-&gt;4)-Mur2Ac(oyl-L-Ala-gamma-D-Glu-L-Lys-D-Ala-D-Ala)-di-trans,octa-cis-undecaprenyl diphosphate = [GlcNAc-(1-&gt;4)-Mur2Ac(oyl-L-Ala-gamma-D-Glu-L-Lys-D-Ala-D-Ala)](n+1)-di-trans,octa-cis-undecaprenyl diphosphate + di-trans,octa-cis-undecaprenyl diphosphate + H(+). It participates in cell wall biogenesis; peptidoglycan biosynthesis. In terms of biological role, peptidoglycan polymerase that catalyzes glycan chain elongation from lipid-linked precursors. The chain is Biosynthetic peptidoglycan transglycosylase from Neisseria meningitidis serogroup B (strain ATCC BAA-335 / MC58).